Consider the following 458-residue polypeptide: Argininosuccinate lyase (458 aa).

The protein belongs to the lyase 1 family. Argininosuccinate lyase subfamily.

The protein resides in the cytoplasm. The catalysed reaction is 2-(N(omega)-L-arginino)succinate = fumarate + L-arginine. It functions in the pathway amino-acid biosynthesis; L-arginine biosynthesis; L-arginine from L-ornithine and carbamoyl phosphate: step 3/3. This is Argininosuccinate lyase from Glaesserella parasuis serovar 5 (strain SH0165) (Haemophilus parasuis).